The sequence spans 262 residues: Pyridoxine 5'-phosphate synthase (262 aa).

Position 6 (Asn6) interacts with 3-amino-2-oxopropyl phosphate. 8-9 (DH) provides a ligand contact to 1-deoxy-D-xylulose 5-phosphate. Arg17 serves as a coordination point for 3-amino-2-oxopropyl phosphate. His41 (proton acceptor) is an active-site residue. Residues Arg43 and His48 each coordinate 1-deoxy-D-xylulose 5-phosphate. The active-site Proton acceptor is the Glu68. Thr98 provides a ligand contact to 1-deoxy-D-xylulose 5-phosphate. His210 serves as the catalytic Proton donor. Residues Gly211 and 232 to 233 (GQ) each bind 3-amino-2-oxopropyl phosphate.

It belongs to the PNP synthase family. As to quaternary structure, homooctamer; tetramer of dimers.

The protein resides in the cytoplasm. The catalysed reaction is 3-amino-2-oxopropyl phosphate + 1-deoxy-D-xylulose 5-phosphate = pyridoxine 5'-phosphate + phosphate + 2 H2O + H(+). Its pathway is cofactor biosynthesis; pyridoxine 5'-phosphate biosynthesis; pyridoxine 5'-phosphate from D-erythrose 4-phosphate: step 5/5. Its function is as follows. Catalyzes the complicated ring closure reaction between the two acyclic compounds 1-deoxy-D-xylulose-5-phosphate (DXP) and 3-amino-2-oxopropyl phosphate (1-amino-acetone-3-phosphate or AAP) to form pyridoxine 5'-phosphate (PNP) and inorganic phosphate. In Campylobacter jejuni subsp. jejuni serotype O:23/36 (strain 81-176), this protein is Pyridoxine 5'-phosphate synthase.